Reading from the N-terminus, the 182-residue chain is Adenylate kinase isoenzyme 6 homolog (182 aa).

The tract at residues 1–20 (MATPETRRRPNILVTGSPGT) is disordered. ATP is bound by residues G19, G21, K22, S23, and T24. The NMPbind stretch occupies residues 39–62 (EVSKEVRENNLQGDFDEQYNCHVL). An LID region spans residues 116–126 (SRGYSEFKIKE). Residue R117 coordinates ATP.

The protein belongs to the adenylate kinase family. AK6 subfamily. As to quaternary structure, monomer and homodimer. Interacts with small ribosomal subunit protein uS11. Not a structural component of 43S pre-ribosomes, but transiently interacts with them by binding to uS11.

Its subcellular location is the cytoplasm. It is found in the nucleus. It carries out the reaction AMP + ATP = 2 ADP. The enzyme catalyses ATP + H2O = ADP + phosphate + H(+). Broad-specificity nucleoside monophosphate (NMP) kinase that catalyzes the reversible transfer of the terminal phosphate group between nucleoside triphosphates and monophosphates. Also has ATPase activity. Involved in the late cytoplasmic maturation steps of the 40S ribosomal particles, specifically 18S rRNA maturation. While NMP activity is not required for ribosome maturation, ATPase activity is. Associates transiently with small ribosomal subunit protein uS11. ATP hydrolysis breaks the interaction with uS11. May temporarily remove uS11 from the ribosome to enable a conformational change of the ribosomal RNA that is needed for the final maturation step of the small ribosomal subunit. Its NMP activity may have a role in nuclear energy homeostasis. AMP and dAMP are the preferred substrates, but CMP and TMP are also good substrates. ATP and dATP are the best phosphate donors. The protein is Adenylate kinase isoenzyme 6 homolog of Caenorhabditis elegans.